The sequence spans 587 residues: Complement component C8 beta chain (587 aa).

Positions 1 to 31 (MNHKLKPTVGLGYCLLCAALCLLLLRDVAIA) are cleaved as a signal peptide. The propeptide occupies 32 to 44 (GSGEEPSGVREAR). The TSP type-1 1 domain occupies 56–111 (DCVQSEWSSWTRCDVCRKKRYRYAKLVQPSQFGGEPCHVQGKEVEPCSPPSRYDCT). Disulfide bonds link C57–C92, C68–C102, C71–C110, C118–C129, and C123–C142. C-linked (Man) tryptophan glycosylation is found at W62 and W65. Residues 117–159 (LCEGFLCTYTGRCVPIDLRCNGDDDCGDWSAEKGSPKVPKACK) form the LDL-receptor class A domain. Residues L134, N137, D139, D141, and E148 each coordinate Ca(2+). The MACPF domain occupies 154 to 500 (VPKACKQEAQ…EYLEESSSCR (347 aa)). A disulfide bridge links C158 with C196. Transmembrane regions (beta stranded) follow at residues 248–255 (TTVSIGFA), 258–265 (GVAEFGFN), 375–382 (EQIVLKVG), and 388–395 (VYVTVGLE). 5 cysteine pairs are disulfide-bonded: C374-C399, C499-C546, C501-C517, C504-C519, and C521-C530. Residues 501 to 531 (CAPCRNNGLAVLKGTRCECVCPSGYSGLGCE) form the EGF-like domain. The TSP type-1 2 domain occupies 541 to 587 (DGSWSCWGSWSPCRGRSKTRSRQCNNPAPSSGGIACRGLQMETTDCF). 2 C-linked (Man) tryptophan glycosylation sites follow: W547 and W550. The cysteines at positions 553 and 586 are disulfide-linked.

Belongs to the complement C6/C7/C8/C9 family. In terms of assembly, heterotrimer of 3 chains: alpha (C8A), beta (C8B) and gamma (C8G); the alpha and gamma chains are disulfide bonded. Component of the membrane attack complex (MAC), composed of complement C5b, C6, C7, C8A, C8B, C8G and multiple copies of the pore-forming subunit C9.

Its subcellular location is the secreted. It is found in the target cell membrane. Functionally, component of the membrane attack complex (MAC), a multiprotein complex activated by the complement cascade, which inserts into a target cell membrane and forms a pore, leading to target cell membrane rupture and cell lysis. The MAC is initiated by proteolytic cleavage of C5 into complement C5b in response to the classical, alternative, lectin and GZMK complement pathways. The complement pathways consist in a cascade of proteins that leads to phagocytosis and breakdown of pathogens and signaling that strengthens the adaptive immune system. C8B, together with C8A and C8G, inserts into the target membrane, but does not form pores by itself. During MAC assembly, associates with C5b, C6 and C7 to form the C5b8 intermediate complex that inserts into the target membrane and traverses the bilayer increasing membrane rigidity. This chain is Complement component C8 beta chain (c8b), found in Oncorhynchus mykiss (Rainbow trout).